A 269-amino-acid chain; its full sequence is Formamidopyrimidine-DNA glycosylase (269 aa).

P2 acts as the Schiff-base intermediate with DNA in catalysis. Catalysis depends on E3, which acts as the Proton donor. The Proton donor; for beta-elimination activity role is filled by K57. The DNA site is built by H90, R109, and K150. The FPG-type zinc finger occupies 235–269 (QVYGRKGEPCRVCGTPIVATKHAQRATFYCRHCQK). Residue R259 is the Proton donor; for delta-elimination activity of the active site.

This sequence belongs to the FPG family. In terms of assembly, monomer. Requires Zn(2+) as cofactor.

The catalysed reaction is Hydrolysis of DNA containing ring-opened 7-methylguanine residues, releasing 2,6-diamino-4-hydroxy-5-(N-methyl)formamidopyrimidine.. It carries out the reaction 2'-deoxyribonucleotide-(2'-deoxyribose 5'-phosphate)-2'-deoxyribonucleotide-DNA = a 3'-end 2'-deoxyribonucleotide-(2,3-dehydro-2,3-deoxyribose 5'-phosphate)-DNA + a 5'-end 5'-phospho-2'-deoxyribonucleoside-DNA + H(+). In terms of biological role, involved in base excision repair of DNA damaged by oxidation or by mutagenic agents. Acts as a DNA glycosylase that recognizes and removes damaged bases. Has a preference for oxidized purines, such as 7,8-dihydro-8-oxoguanine (8-oxoG). Has AP (apurinic/apyrimidinic) lyase activity and introduces nicks in the DNA strand. Cleaves the DNA backbone by beta-delta elimination to generate a single-strand break at the site of the removed base with both 3'- and 5'-phosphates. This chain is Formamidopyrimidine-DNA glycosylase, found in Salmonella agona (strain SL483).